The chain runs to 417 residues: Imidazolonepropionase (417 aa).

Fe(3+) is bound by residues H77 and H79. The Zn(2+) site is built by H77 and H79. Residues R86, Y149, and H182 each contribute to the 4-imidazolone-5-propanoate site. Residue Y149 coordinates N-formimidoyl-L-glutamate. Residue H247 participates in Fe(3+) binding. A Zn(2+)-binding site is contributed by H247. Q250 serves as a coordination point for 4-imidazolone-5-propanoate. D322 serves as a coordination point for Fe(3+). A Zn(2+)-binding site is contributed by D322. Residues N324 and G326 each contribute to the N-formimidoyl-L-glutamate site. T327 provides a ligand contact to 4-imidazolone-5-propanoate.

The protein belongs to the metallo-dependent hydrolases superfamily. HutI family. Zn(2+) serves as cofactor. Fe(3+) is required as a cofactor.

It is found in the cytoplasm. It carries out the reaction 4-imidazolone-5-propanoate + H2O = N-formimidoyl-L-glutamate. The protein operates within amino-acid degradation; L-histidine degradation into L-glutamate; N-formimidoyl-L-glutamate from L-histidine: step 3/3. In terms of biological role, catalyzes the hydrolytic cleavage of the carbon-nitrogen bond in imidazolone-5-propanoate to yield N-formimidoyl-L-glutamate. It is the third step in the universal histidine degradation pathway. This Cupriavidus necator (strain ATCC 17699 / DSM 428 / KCTC 22496 / NCIMB 10442 / H16 / Stanier 337) (Ralstonia eutropha) protein is Imidazolonepropionase.